We begin with the raw amino-acid sequence, 359 residues long: GTP cyclohydrolase FolE2 (359 aa).

It belongs to the GTP cyclohydrolase IV family.

The catalysed reaction is GTP + H2O = 7,8-dihydroneopterin 3'-triphosphate + formate + H(+). The protein operates within cofactor biosynthesis; 7,8-dihydroneopterin triphosphate biosynthesis; 7,8-dihydroneopterin triphosphate from GTP: step 1/1. Functionally, converts GTP to 7,8-dihydroneopterin triphosphate. The protein is GTP cyclohydrolase FolE2 of Cereibacter sphaeroides (strain ATCC 17029 / ATH 2.4.9) (Rhodobacter sphaeroides).